A 270-amino-acid polypeptide reads, in one-letter code: Release factor glutamine methyltransferase (270 aa).

S-adenosyl-L-methionine contacts are provided by residues 113–117, Asp136, and Asn177; that span reads GTGSG. 177–180 contributes to the substrate binding site; sequence NPPY.

The protein belongs to the protein N5-glutamine methyltransferase family. PrmC subfamily.

The enzyme catalyses L-glutaminyl-[peptide chain release factor] + S-adenosyl-L-methionine = N(5)-methyl-L-glutaminyl-[peptide chain release factor] + S-adenosyl-L-homocysteine + H(+). Functionally, methylates the class 1 translation termination release factors RF1/PrfA and RF2/PrfB on the glutamine residue of the universally conserved GGQ motif. The chain is Release factor glutamine methyltransferase from Lactococcus lactis subsp. lactis (strain IL1403) (Streptococcus lactis).